A 63-amino-acid polypeptide reads, in one-letter code: Small ribosomal subunit protein eS27 (63 aa).

The Zn(2+) site is built by Cys-18, Cys-21, Cys-37, and Cys-40. A C4-type zinc finger spans residues 18–40; it reads CLDCGNQQVVFDRAASYVQCIIC.

It belongs to the eukaryotic ribosomal protein eS27 family. In terms of assembly, part of the 30S ribosomal subunit. It depends on Zn(2+) as a cofactor.

The polypeptide is Small ribosomal subunit protein eS27 (Methanothermobacter thermautotrophicus (strain ATCC 29096 / DSM 1053 / JCM 10044 / NBRC 100330 / Delta H) (Methanobacterium thermoautotrophicum)).